The following is a 280-amino-acid chain: Urease accessory protein UreD (280 aa).

Belongs to the UreD family. UreD, UreF and UreG form a complex that acts as a GTP-hydrolysis-dependent molecular chaperone, activating the urease apoprotein by helping to assemble the nickel containing metallocenter of UreC. The UreE protein probably delivers the nickel.

The protein resides in the cytoplasm. In terms of biological role, required for maturation of urease via the functional incorporation of the urease nickel metallocenter. This is Urease accessory protein UreD from Pseudomonas aeruginosa (strain UCBPP-PA14).